Reading from the N-terminus, the 594-residue chain is UvrABC system protein C (594 aa).

The region spanning 14-91 (DKPGCYLMKD…IKKHDPKYNV (78 aa)) is the GIY-YIG domain. In terms of domain architecture, UVR spans 196–231 (SDIKEQLRERMEKAAEDLDFERAKELRDTIAQMEKV).

It belongs to the UvrC family. In terms of assembly, interacts with UvrB in an incision complex.

It is found in the cytoplasm. Its function is as follows. The UvrABC repair system catalyzes the recognition and processing of DNA lesions. UvrC both incises the 5' and 3' sides of the lesion. The N-terminal half is responsible for the 3' incision and the C-terminal half is responsible for the 5' incision. This Shouchella clausii (strain KSM-K16) (Alkalihalobacillus clausii) protein is UvrABC system protein C.